The sequence spans 715 residues: Methionine--tRNA ligase (715 aa).

The 'HIGH' region motif lies at 20–30 (PYANGKAHIGH). Residues Cys-151, Cys-154, Cys-163, and Cys-167 each contribute to the Zn(2+) site. Residues 334–338 (KFSKT) carry the 'KMSKS' region motif. Lys-337 provides a ligand contact to ATP. Residues 559–593 (ANAKRNGVKGGEKEPSKSEGMGPSEASKASEKTVD) form a disordered region. Residues 613-715 (DFAKLDIRVG…KEIKSGSRIR (103 aa)) enclose the tRNA-binding domain.

Belongs to the class-I aminoacyl-tRNA synthetase family. MetG type 1 subfamily. Homodimer. Zn(2+) serves as cofactor.

The protein resides in the cytoplasm. The enzyme catalyses tRNA(Met) + L-methionine + ATP = L-methionyl-tRNA(Met) + AMP + diphosphate. Its function is as follows. Is required not only for elongation of protein synthesis but also for the initiation of all mRNA translation through initiator tRNA(fMet) aminoacylation. The protein is Methionine--tRNA ligase of Methanosarcina mazei (strain ATCC BAA-159 / DSM 3647 / Goe1 / Go1 / JCM 11833 / OCM 88) (Methanosarcina frisia).